The following is a 358-amino-acid chain: Naringenin,2-oxoglutarate 3-dioxygenase (358 aa).

The Fe2OG dioxygenase domain maps to 190–294 (CVDMDQKIVV…RLSIATFQNP (105 aa)). Residues histidine 217, aspartate 219, and histidine 275 each coordinate Fe cation. 2-oxoglutarate is bound at residue arginine 285.

This sequence belongs to the iron/ascorbate-dependent oxidoreductase family. In terms of assembly, interacts with Dihydroflavonol-4-reductase (TT3), chalcone synthase (TT4) and chalcone isomerase (TT5) to form a flavonoid enzyme complex. Fe(2+) serves as cofactor. The cofactor is L-ascorbate.

It carries out the reaction a (2S)-flavan-4-one + 2-oxoglutarate + O2 = a (2R,3R)-dihydroflavonol + succinate + CO2. It functions in the pathway secondary metabolite biosynthesis; flavonoid biosynthesis. Functionally, catalyzes the 3-beta-hydroxylation of 2S-flavanones to 2R,3R-dihydroflavonols which are intermediates in the biosynthesis of flavonols, anthocyanidins, catechins and proanthocyanidins in plants. This chain is Naringenin,2-oxoglutarate 3-dioxygenase (F3H), found in Arabidopsis thaliana (Mouse-ear cress).